We begin with the raw amino-acid sequence, 163 residues long: UPF0262 protein RPB_4349 (163 aa).

The protein belongs to the UPF0262 family.

This is UPF0262 protein RPB_4349 from Rhodopseudomonas palustris (strain HaA2).